Reading from the N-terminus, the 582-residue chain is Aspartate--tRNA(Asp/Asn) ligase (582 aa).

E177 provides a ligand contact to L-aspartate. The segment at 201 to 204 (QLFK) is aspartate. Residue R223 participates in L-aspartate binding. Residues 223 to 225 (RDE) and Q232 contribute to the ATP site. H447 is an L-aspartate binding site. E481 contributes to the ATP binding site. R488 is an L-aspartate binding site. Residue 533–536 (GLDR) coordinates ATP.

This sequence belongs to the class-II aminoacyl-tRNA synthetase family. Type 1 subfamily. As to quaternary structure, homodimer.

The protein resides in the cytoplasm. It carries out the reaction tRNA(Asx) + L-aspartate + ATP = L-aspartyl-tRNA(Asx) + AMP + diphosphate. Its function is as follows. Aspartyl-tRNA synthetase with relaxed tRNA specificity since it is able to aspartylate not only its cognate tRNA(Asp) but also tRNA(Asn). Reaction proceeds in two steps: L-aspartate is first activated by ATP to form Asp-AMP and then transferred to the acceptor end of tRNA(Asp/Asn). This chain is Aspartate--tRNA(Asp/Asn) ligase, found in Chlamydia muridarum (strain MoPn / Nigg).